Here is a 558-residue protein sequence, read N- to C-terminus: Polypeptide N-acetylgalactosaminyltransferase 16 (558 aa).

Over 1–6 (MRKIRA) the chain is Cytoplasmic. A helical; Signal-anchor for type II membrane protein transmembrane segment spans residues 7 to 26 (NAIAILTVAWILGTFYYLWQ). The Lumenal portion of the chain corresponds to 27 to 558 (DNRAHAASSG…AQQWQLLPHT (532 aa)). Positions 33 to 54 (ASSGGRGAQRAGRRSEQLREDR) are disordered. The segment covering 45 to 54 (RRSEQLREDR) has biased composition (basic and acidic residues). Disulfide bonds link cysteine 113/cysteine 340, cysteine 331/cysteine 409, cysteine 441/cysteine 460, cysteine 486/cysteine 506, and cysteine 530/cysteine 543. Residues 122 to 227 (LPATSVIITF…TEWLPPMLQR (106 aa)) are catalytic subdomain A. Substrate contacts are provided by aspartate 163 and arginine 188. Mn(2+) is bound at residue aspartate 211. Serine 212 serves as a coordination point for substrate. Residue histidine 213 coordinates Mn(2+). Positions 286 to 348 (PIRTPVIAGG…PCSRVGHVFR (63 aa)) are catalytic subdomain B. Tryptophan 317 contributes to the substrate binding site. Mn(2+) is bound at residue histidine 345. Residues arginine 348, histidine 351, and tyrosine 353 each coordinate substrate. Positions 428–555 (KEALPGIIKQ…DAQAQQWQLL (128 aa)) constitute a Ricin B-type lectin domain.

It belongs to the glycosyltransferase 2 family. GalNAc-T subfamily. Mn(2+) is required as a cofactor.

It localises to the golgi apparatus membrane. The catalysed reaction is L-seryl-[protein] + UDP-N-acetyl-alpha-D-galactosamine = a 3-O-[N-acetyl-alpha-D-galactosaminyl]-L-seryl-[protein] + UDP + H(+). It carries out the reaction L-threonyl-[protein] + UDP-N-acetyl-alpha-D-galactosamine = a 3-O-[N-acetyl-alpha-D-galactosaminyl]-L-threonyl-[protein] + UDP + H(+). It functions in the pathway protein modification; protein glycosylation. Its function is as follows. Catalyzes the initial reaction in O-linked oligosaccharide biosynthesis, the transfer of an N-acetyl-D-galactosamine residue to a serine or threonine residue on the protein receptor. The chain is Polypeptide N-acetylgalactosaminyltransferase 16 (GALNT16) from Homo sapiens (Human).